Reading from the N-terminus, the 476-residue chain is Bifunctional protein HldE (476 aa).

The ribokinase stretch occupies residues 1-319 (MKVSLPAFEK…EALALHHGES (319 aa)). Position 195–198 (195–198 (NMSE)) interacts with ATP. The active site involves D264. Residues 345-476 (MTNGCFDILH…AIIQNIMANQ (132 aa)) are cytidylyltransferase.

This sequence in the N-terminal section; belongs to the carbohydrate kinase PfkB family. The protein in the C-terminal section; belongs to the cytidylyltransferase family. In terms of assembly, homodimer.

The enzyme catalyses D-glycero-beta-D-manno-heptose 7-phosphate + ATP = D-glycero-beta-D-manno-heptose 1,7-bisphosphate + ADP + H(+). The catalysed reaction is D-glycero-beta-D-manno-heptose 1-phosphate + ATP + H(+) = ADP-D-glycero-beta-D-manno-heptose + diphosphate. Its pathway is nucleotide-sugar biosynthesis; ADP-L-glycero-beta-D-manno-heptose biosynthesis; ADP-L-glycero-beta-D-manno-heptose from D-glycero-beta-D-manno-heptose 7-phosphate: step 1/4. The protein operates within nucleotide-sugar biosynthesis; ADP-L-glycero-beta-D-manno-heptose biosynthesis; ADP-L-glycero-beta-D-manno-heptose from D-glycero-beta-D-manno-heptose 7-phosphate: step 3/4. Catalyzes the phosphorylation of D-glycero-D-manno-heptose 7-phosphate at the C-1 position to selectively form D-glycero-beta-D-manno-heptose-1,7-bisphosphate. Functionally, catalyzes the ADP transfer from ATP to D-glycero-beta-D-manno-heptose 1-phosphate, yielding ADP-D-glycero-beta-D-manno-heptose. The polypeptide is Bifunctional protein HldE (Shewanella baltica (strain OS195)).